The sequence spans 279 residues: uncharacterized protein (279 aa).

An HTH rpiR-type domain is found at 1 to 77; that stretch reads MGILEQLENP…VTLAKEISNK (77 aa). The H-T-H motif DNA-binding region spans 37-56; that stretch reads ISIIAKESGVGEATITRFTK. The region spanning 123 to 263 is the SIS domain; it reads CRDLIMNAKR…YTEVIKEMFS (141 aa).

This is an uncharacterized protein from Clostridium perfringens (strain 13 / Type A).